We begin with the raw amino-acid sequence, 74 residues long: Large ribosomal subunit protein eL38B (74 aa).

Belongs to the eukaryotic ribosomal protein eL38 family. As to quaternary structure, component of the large ribosomal subunit (LSU). Mature yeast ribosomes consist of a small (40S) and a large (60S) subunit. The 40S small subunit contains 1 molecule of ribosomal RNA (18S rRNA) and at least 33 different proteins. The large 60S subunit contains 3 rRNA molecules (25S, 5.8S and 5S rRNA) and at least 46 different proteins.

The protein resides in the cytoplasm. In terms of biological role, component of the ribosome, a large ribonucleoprotein complex responsible for the synthesis of proteins in the cell. The small ribosomal subunit (SSU) binds messenger RNAs (mRNAs) and translates the encoded message by selecting cognate aminoacyl-transfer RNA (tRNA) molecules. The large subunit (LSU) contains the ribosomal catalytic site termed the peptidyl transferase center (PTC), which catalyzes the formation of peptide bonds, thereby polymerizing the amino acids delivered by tRNAs into a polypeptide chain. The nascent polypeptides leave the ribosome through a tunnel in the LSU and interact with protein factors that function in enzymatic processing, targeting, and the membrane insertion of nascent chains at the exit of the ribosomal tunnel. In Schizosaccharomyces pombe (strain 972 / ATCC 24843) (Fission yeast), this protein is Large ribosomal subunit protein eL38B (rpl3802).